The following is a 226-amino-acid chain: Deoxyribose-phosphate aldolase (226 aa).

The active-site Proton donor/acceptor is D94. K156 acts as the Schiff-base intermediate with acetaldehyde in catalysis. The active-site Proton donor/acceptor is K185.

It belongs to the DeoC/FbaB aldolase family. DeoC type 1 subfamily.

It localises to the cytoplasm. It catalyses the reaction 2-deoxy-D-ribose 5-phosphate = D-glyceraldehyde 3-phosphate + acetaldehyde. It functions in the pathway carbohydrate degradation; 2-deoxy-D-ribose 1-phosphate degradation; D-glyceraldehyde 3-phosphate and acetaldehyde from 2-deoxy-alpha-D-ribose 1-phosphate: step 2/2. Functionally, catalyzes a reversible aldol reaction between acetaldehyde and D-glyceraldehyde 3-phosphate to generate 2-deoxy-D-ribose 5-phosphate. The protein is Deoxyribose-phosphate aldolase of Burkholderia lata (strain ATCC 17760 / DSM 23089 / LMG 22485 / NCIMB 9086 / R18194 / 383).